We begin with the raw amino-acid sequence, 316 residues long: 4-hydroxy-3-methylbut-2-enyl diphosphate reductase (316 aa).

Cys-12 is a [4Fe-4S] cluster binding site. His-43 and His-81 together coordinate (2E)-4-hydroxy-3-methylbut-2-enyl diphosphate. Dimethylallyl diphosphate is bound by residues His-43 and His-81. Positions 43 and 81 each coordinate isopentenyl diphosphate. Cys-103 is a binding site for [4Fe-4S] cluster. His-131 lines the (2E)-4-hydroxy-3-methylbut-2-enyl diphosphate pocket. His-131 contacts dimethylallyl diphosphate. His-131 is an isopentenyl diphosphate binding site. Glu-133 serves as the catalytic Proton donor. A (2E)-4-hydroxy-3-methylbut-2-enyl diphosphate-binding site is contributed by Thr-170. Residue Cys-198 participates in [4Fe-4S] cluster binding. Residues Ser-226, Asn-228, and Ser-271 each contribute to the (2E)-4-hydroxy-3-methylbut-2-enyl diphosphate site. 3 residues coordinate dimethylallyl diphosphate: Ser-226, Asn-228, and Ser-271. The isopentenyl diphosphate site is built by Ser-226, Asn-228, and Ser-271.

Belongs to the IspH family. [4Fe-4S] cluster serves as cofactor.

The catalysed reaction is isopentenyl diphosphate + 2 oxidized [2Fe-2S]-[ferredoxin] + H2O = (2E)-4-hydroxy-3-methylbut-2-enyl diphosphate + 2 reduced [2Fe-2S]-[ferredoxin] + 2 H(+). The enzyme catalyses dimethylallyl diphosphate + 2 oxidized [2Fe-2S]-[ferredoxin] + H2O = (2E)-4-hydroxy-3-methylbut-2-enyl diphosphate + 2 reduced [2Fe-2S]-[ferredoxin] + 2 H(+). It participates in isoprenoid biosynthesis; dimethylallyl diphosphate biosynthesis; dimethylallyl diphosphate from (2E)-4-hydroxy-3-methylbutenyl diphosphate: step 1/1. Its pathway is isoprenoid biosynthesis; isopentenyl diphosphate biosynthesis via DXP pathway; isopentenyl diphosphate from 1-deoxy-D-xylulose 5-phosphate: step 6/6. Functionally, catalyzes the conversion of 1-hydroxy-2-methyl-2-(E)-butenyl 4-diphosphate (HMBPP) into a mixture of isopentenyl diphosphate (IPP) and dimethylallyl diphosphate (DMAPP). Acts in the terminal step of the DOXP/MEP pathway for isoprenoid precursor biosynthesis. This Geobacillus kaustophilus (strain HTA426) protein is 4-hydroxy-3-methylbut-2-enyl diphosphate reductase.